A 250-amino-acid polypeptide reads, in one-letter code: tRNA (guanine-N(7)-)-methyltransferase (250 aa).

S-adenosyl-L-methionine contacts are provided by Glu-86, Glu-111, Asp-138, and Asp-161. Asp-161 is an active-site residue. Residues Lys-165, Asp-197, and 229 to 232 each bind substrate; that span reads TEFE.

The protein belongs to the class I-like SAM-binding methyltransferase superfamily. TrmB family.

The catalysed reaction is guanosine(46) in tRNA + S-adenosyl-L-methionine = N(7)-methylguanosine(46) in tRNA + S-adenosyl-L-homocysteine. It participates in tRNA modification; N(7)-methylguanine-tRNA biosynthesis. Catalyzes the formation of N(7)-methylguanine at position 46 (m7G46) in tRNA. This Treponema pallidum (strain Nichols) protein is tRNA (guanine-N(7)-)-methyltransferase.